The chain runs to 520 residues: Glutamate--cysteine ligase (520 aa).

It belongs to the glutamate--cysteine ligase type 1 family. Type 1 subfamily.

The catalysed reaction is L-cysteine + L-glutamate + ATP = gamma-L-glutamyl-L-cysteine + ADP + phosphate + H(+). It functions in the pathway sulfur metabolism; glutathione biosynthesis; glutathione from L-cysteine and L-glutamate: step 1/2. The polypeptide is Glutamate--cysteine ligase (Serratia proteamaculans (strain 568)).